We begin with the raw amino-acid sequence, 452 residues long: Isocitrate dehydrogenase [NADP], mitochondrial (452 aa).

A mitochondrion-targeting transit peptide spans 1–39; that stretch reads MAGYLRVVRSLCRASGSRPAWAPAALTAPTSQEQPRRHY. Residues Lys-45, Lys-48, Lys-67, and Lys-69 each carry the N6-acetyllysine modification. An N6-acetyllysine; alternate mark is found at Lys-80 and Lys-106. An N6-succinyllysine; alternate mark is found at Lys-80 and Lys-106. Residues 115-117 and Arg-122 contribute to the NADP(+) site; that span reads TIT. Thr-117 is a binding site for D-threo-isocitrate. D-threo-isocitrate is bound by residues 134–140 and Arg-149; that span reads SPNGTIR. N6-acetyllysine is present on Lys-155. Lys-166 bears the N6-acetyllysine; alternate mark. At Lys-166 the chain carries N6-succinyllysine; alternate. A D-threo-isocitrate-binding site is contributed by Arg-172. An N6-acetyllysine; alternate mark is found at Lys-180 and Lys-193. 2 positions are modified to N6-succinyllysine; alternate: Lys-180 and Lys-193. Position 199 is an N6-acetyllysine (Lys-199). Residue Lys-256 is modified to N6-acetyllysine; alternate. At Lys-256 the chain carries N6-succinyllysine; alternate. Residues Lys-263, Lys-272, Lys-275, and Lys-280 each carry the N6-acetyllysine modification. An N6-acetyllysine; alternate modification is found at Lys-282. N6-succinyllysine; alternate is present on Lys-282. A Mn(2+)-binding site is contributed by Asp-291. An NADP(+)-binding site is contributed by Lys-299. Asp-314 serves as a coordination point for Mn(2+). NADP(+) is bound by residues 349–354 and Asn-367; that span reads GTVTRH. Lys-384 carries the N6-acetyllysine; alternate modification. N6-succinyllysine; alternate is present on Lys-384. Lys-400, Lys-413, and Lys-442 each carry N6-acetyllysine.

The protein belongs to the isocitrate and isopropylmalate dehydrogenases family. As to quaternary structure, homodimer. Requires Mg(2+) as cofactor. The cofactor is Mn(2+). In terms of processing, acetylation at Lys-413 dramatically reduces catalytic activity. Deacetylated by SIRT3.

The protein resides in the mitochondrion. The enzyme catalyses D-threo-isocitrate + NADP(+) = 2-oxoglutarate + CO2 + NADPH. Plays a role in intermediary metabolism and energy production. It may tightly associate or interact with the pyruvate dehydrogenase complex. This chain is Isocitrate dehydrogenase [NADP], mitochondrial (IDH2), found in Homo sapiens (Human).